The following is a 153-amino-acid chain: Large ribosomal subunit protein bL9 (153 aa).

The protein belongs to the bacterial ribosomal protein bL9 family.

In terms of biological role, binds to the 23S rRNA. The sequence is that of Large ribosomal subunit protein bL9 from Synechococcus sp. (strain JA-3-3Ab) (Cyanobacteria bacterium Yellowstone A-Prime).